Here is a 677-residue protein sequence, read N- to C-terminus: Epithelial splicing regulatory protein 1 (677 aa).

RRM domains lie at 225-302 (TVVR…KATG), 326-406 (VIVR…RSTA), and 445-525 (DCVR…QCSA). The residue at position 543 (serine 543) is a Phosphoserine. At arginine 578 the chain carries Omega-N-methylarginine.

Belongs to the ESRP family.

The protein resides in the nucleus. Functionally, mRNA splicing factor that regulates the formation of epithelial cell-specific isoforms. Specifically regulates the expression of FGFR2-IIIb, an epithelial cell-specific isoform of FGFR2. Also regulates the splicing of CD44, CTNND1, ENAH, 3 transcripts that undergo changes in splicing during the epithelial-to-mesenchymal transition (EMT). Acts by directly binding specific sequences in mRNAs. Binds the GU-rich sequence motifs in the ISE/ISS-3, a cis-element regulatory region present in the mRNA of FGFR2. Regulates splicing and expression of genes involved in inner ear development, auditory hair cell differentiation, and cell fate specification in the cochlear epithelium. The protein is Epithelial splicing regulatory protein 1 (Esrp1) of Rattus norvegicus (Rat).